We begin with the raw amino-acid sequence, 166 residues long: 3-isopropylmalate dehydratase small subunit (166 aa).

The protein belongs to the LeuD family. LeuD type 2 subfamily. Heterodimer of LeuC and LeuD.

The enzyme catalyses (2R,3S)-3-isopropylmalate = (2S)-2-isopropylmalate. It functions in the pathway amino-acid biosynthesis; L-leucine biosynthesis; L-leucine from 3-methyl-2-oxobutanoate: step 2/4. In terms of biological role, catalyzes the isomerization between 2-isopropylmalate and 3-isopropylmalate, via the formation of 2-isopropylmaleate. The chain is 3-isopropylmalate dehydratase small subunit from Nautilia profundicola (strain ATCC BAA-1463 / DSM 18972 / AmH).